Here is a 523-residue protein sequence, read N- to C-terminus: Transcription factor MYB120 (523 aa).

HTH myb-type domains follow at residues 23–75 (GVIL…ANHL) and 76–130 (RPNL…KRLL). 2 consecutive DNA-binding regions (H-T-H motif) follow at residues 51-75 (WNAVQKNTGLARCGKSCRLRWANHL) and 103-126 (WARMAAQLPGRTDNEIKNYWNTRL). Disordered regions lie at residues 140–254 (DIIP…YPTL), 332–373 (QTAT…SHYT), 396–426 (QIPQIDGFNNVNNFTDNERQNHNLNSSGAHR), and 444–470 (LASGGRGRPPKRRQLTASLPNHNNNTN). Residues 147–167 (LHPHPHHQQQQQHNHHHHHHQ) show a composition bias toward basic residues. Residues 175–185 (MYFQPQSSQRN) show a composition bias toward polar residues. 3 stretches are compositionally biased toward low complexity: residues 202–212 (SSSSFTFHTTT), 223–232 (TPNTPSQLSS), and 341–368 (NPYSSSPSFSLNPSSSSYPTSTSSPSFL). Residues 396 to 410 (QIPQIDGFNNVNNFT) show a composition bias toward polar residues.

As to expression, expressed in pollen grains and pollen tube. Mostly expressed in mature pollen grains, and, to a lower extent, in inflorescences and siliques.

Its subcellular location is the nucleus. In terms of biological role, transcription activator. Binds to 5'-CAACTGTC-3' and/or 5'-TAACAAA-3' motif in target gene promoter to promote their expression. Together with MYB97 and MYB101, functions as a male factor that controls pollen tube-synergid interaction in fertilization. Required for pollen tube growth arrest and sperm cell release in the female gametophyte, probably via the regulation of pollen tube-specific gene expression. This is Transcription factor MYB120 from Arabidopsis thaliana (Mouse-ear cress).